The following is a 277-amino-acid chain: 4-hydroxybenzoate octaprenyltransferase (277 aa).

Helical transmembrane passes span 24 to 44, 81 to 101, 102 to 122, 129 to 149, 152 to 172, 201 to 221, 224 to 244, and 255 to 275; these read FAAAGGIPSSSILIIFILGVI, VEAKVLFFVLLIIAFLLDLSL, NQYAFLLSFVAVALAVIYPFM, PQVVLGMAFGWAIPMAYGAVI, LPLTCWLLFLANILWTVAYDT, IIALLQFLSLILFILFGWLSE, IGYFIVLALTSTLFIYQCWLT, and AFLNNNYFGFGIFIAILVGIY.

Belongs to the UbiA prenyltransferase family. Mg(2+) is required as a cofactor.

It localises to the cell inner membrane. The catalysed reaction is all-trans-octaprenyl diphosphate + 4-hydroxybenzoate = 4-hydroxy-3-(all-trans-octaprenyl)benzoate + diphosphate. It functions in the pathway cofactor biosynthesis; ubiquinone biosynthesis. Functionally, catalyzes the prenylation of para-hydroxybenzoate (PHB) with an all-trans polyprenyl group. Mediates the second step in the final reaction sequence of ubiquinone-8 (UQ-8) biosynthesis, which is the condensation of the polyisoprenoid side chain with PHB, generating the first membrane-bound Q intermediate 3-octaprenyl-4-hydroxybenzoate. This chain is 4-hydroxybenzoate octaprenyltransferase, found in Haemophilus ducreyi (strain 35000HP / ATCC 700724).